We begin with the raw amino-acid sequence, 775 residues long: MTASTQNGSPTPPPAAPTATNQESKNMTANPADASESQSPANEKGSGTAESGQKHTSTAANAKDPLRPRRKKAKRACFACQRAHLTCGDERPCQRCIKRGLQDACHDGVRKKAKYLHDAPNEALMPGIRRNFYNQANATRTNANQQQNGPNSNSNKDSRQNVAANFYSPQSASNFDVYTQAKSQQGQGHIPPTVMQDTSINPSAFQAPSPTSTPNFDLSSNPPNRNLSSAMTQTPSSASNQTQDPFGAAFFDPSHPALFNFDIASMNFGNRYGALEFGMLGHMATGAGDTPPSDSATQRGSIGRSSGTFTAQNFGDSTNTQSPFLFGDPVLNDWNPSGQSQTNPRNNNIYNQNTVAGQMGEQHPNAFAIESAPMNFASPGSTESPQMTTMNQFDEANAKFSSRTALMHQTNPHQPPPISTPGLKHQGFQVGVKRRYRSPSSIYESVKEPYSYTSGFHNLTAFIQRRFSPQKTLQIAKALASIRPSFIATTKTLNQDDLIFMEKCFQRTLWEYEDFINACGTPTIVCRRTGEIAAVGKEFSILTGWKKEVLLGKEPNLNVNTGGSSPRGSGTFTPRNGNGVDPHSGMSAAGGGGGRTQPVFLAELLDDDSVIEFYEDFAKLAFGDSRGSVMTTCKLLKYKTKEDSAALFQGKEAQQGGSDGKGGGGGGDVAATAATTSTSTSNGANSSGHANANRNNTNPKNSSPPSSSSAAAAGPLHGAQLSPKQTWGKRGIAGEAGMNQLGFRDGKVECSYCWTVKRDVFDIPMLIVMNFLPCI.

The disordered stretch occupies residues 1-70; that stretch reads MTASTQNGSP…NAKDPLRPRR (70 aa). Polar residues-rich tracts occupy residues 21–41 and 48–60; these read NQESKNMTANPADASESQSPA and TAESGQKHTSTAA. A DNA-binding region (zn(2)-C6 fungal-type) is located at residues 77 to 105; it reads CFACQRAHLTCGDERPCQRCIKRGLQDAC. Disordered regions lie at residues 179–248, 286–351, 556–592, and 649–725; these read TQAK…PFGA, GAGD…NIYN, NLNVNTGGSSPRGSGTFTPRNGNGVDPHSGMSAAGGG, and QGKE…SPKQ. Over residues 195 to 217 the composition is skewed to polar residues; that stretch reads MQDTSINPSAFQAPSPTSTPNFD. Low complexity predominate over residues 218-229; sequence LSSNPPNRNLSS. 4 stretches are compositionally biased toward polar residues: residues 230–244, 292–323, 334–351, and 557–576; these read AMTQTPSSASNQTQD, PSDSATQRGSIGRSSGTFTAQNFGDSTNTQSP, WNPSGQSQTNPRNNNIYN, and LNVNTGGSSPRGSGTFTPRN. Residues 657–668 show a composition bias toward gly residues; that stretch reads GSDGKGGGGGGD. Low complexity predominate over residues 669–713; it reads VAATAATTSTSTSNGANSSGHANANRNNTNPKNSSPPSSSSAAAA.

This sequence belongs to the ERT1/acuK family.

It localises to the nucleus. Its function is as follows. Transcription factor which regulates nonfermentable carbon utilization. Activator of gluconeogenetic genes. The polypeptide is Transcription activator of gluconeogenesis HCBG_00867 (Ajellomyces capsulatus (strain G186AR / H82 / ATCC MYA-2454 / RMSCC 2432) (Darling's disease fungus)).